A 483-amino-acid chain; its full sequence is MEKWWLNSMLSNEDLGRRCGLSASLGPIGNTSGSEEPITNDNEKNIHSWSGRGSYSYSNVDYLLGLDGVKDIWSLISGDTFWVRDSNGDSYSVYFDIENKIFEIDTDSYFLGELESLFSSYLNLNSGSKDYNRYYDQYVYDTRHSWKNHINSCIDSYIRSETNMDSCISNGSNNSSDNYIYSYICSDSERGSDRGSSNLKTSVSDFGRHSDLDRNLKYGHLWVQCENCYGLNYKKFFSSKMNICEQCGYHLKMSSSDRIELLIDPGTWDPMDENMVSIDPIEFHSEEEPYRDRINSYQIETGLAEAVQTGIGKLNGIPIAIGVMDFKFMGGSMGSVVGEKITRLIEYATDRSLPVIMVCASGGARMQEGSLSLMQMAKISSALYNYQSNKKLFYVSILTSPTTGGVTASFGMLGDIIIAEPNAYIAFAGKRVIEQTLKKTVPEGSQVAEYSFHKGLFDPIVPRNLLKGVPSELFQFHGFFPRP.

The CoA carboxyltransferase N-terminal domain maps to 221–483; the sequence is LWVQCENCYG…FQFHGFFPRP (263 aa). The Zn(2+) site is built by Cys-225, Cys-228, Cys-244, and Cys-247. Residues 225 to 247 form a C4-type zinc finger; the sequence is CENCYGLNYKKFFSSKMNICEQC.

The protein belongs to the AccD/PCCB family. As to quaternary structure, acetyl-CoA carboxylase is a heterohexamer composed of biotin carboxyl carrier protein, biotin carboxylase and 2 subunits each of ACCase subunit alpha and ACCase plastid-coded subunit beta (accD). It depends on Zn(2+) as a cofactor.

The protein resides in the plastid. The protein localises to the chloroplast stroma. The catalysed reaction is N(6)-carboxybiotinyl-L-lysyl-[protein] + acetyl-CoA = N(6)-biotinyl-L-lysyl-[protein] + malonyl-CoA. The protein operates within lipid metabolism; malonyl-CoA biosynthesis; malonyl-CoA from acetyl-CoA: step 1/1. Its function is as follows. Component of the acetyl coenzyme A carboxylase (ACC) complex. Biotin carboxylase (BC) catalyzes the carboxylation of biotin on its carrier protein (BCCP) and then the CO(2) group is transferred by the transcarboxylase to acetyl-CoA to form malonyl-CoA. This Nuphar advena (Common spatterdock) protein is Acetyl-coenzyme A carboxylase carboxyl transferase subunit beta, chloroplastic.